The following is a 741-amino-acid chain: Ion-translocating oxidoreductase complex subunit C (741 aa).

2 4Fe-4S ferredoxin-type domains span residues 369–397 (GEPQ…QQLY) and 407–436 (KATT…VQYF). [4Fe-4S] cluster is bound by residues cysteine 377, cysteine 380, cysteine 383, cysteine 387, cysteine 416, cysteine 419, cysteine 422, and cysteine 426. Positions 627-654 (IARAKARKLEQQQQANAEPEEQVDPRKA) are disordered.

It belongs to the 4Fe4S bacterial-type ferredoxin family. RnfC subfamily. In terms of assembly, the complex is composed of six subunits: RsxA, RsxB, RsxC, RsxD, RsxE and RsxG. It depends on [4Fe-4S] cluster as a cofactor.

It localises to the cell inner membrane. Functionally, part of a membrane-bound complex that couples electron transfer with translocation of ions across the membrane. Required to maintain the reduced state of SoxR. The protein is Ion-translocating oxidoreductase complex subunit C of Escherichia coli O127:H6 (strain E2348/69 / EPEC).